The following is a 574-amino-acid chain: Probable glucomannan 4-beta-mannosyltransferase 6 (574 aa).

Residues 87 to 107 traverse the membrane as a helical segment; sequence VVACMVMSVIVLAEKVFLGVV. Residue Asp-180 is part of the active site. Residues Asp-239 and Asp-241 each coordinate substrate. Residue Asp-333 is part of the active site. 4 helical membrane-spanning segments follow: residues 412-432, 437-457, 523-543, and 548-568; these read IIST…KVFF, IPLW…SVGT, FHCL…YDYL, and IFYI…FEFM.

The protein belongs to the glycosyltransferase 2 family. Plant cellulose synthase-like A subfamily.

The protein resides in the golgi apparatus membrane. It catalyses the reaction GDP-mannose + (glucomannan)n = GDP + (glucomannan)n+1.. Probable mannan synthase which consists of a 4-beta-mannosyltransferase activity on mannan using GDP-mannose. The beta-1,4-mannan product is the backbone for galactomannan synthesis by galactomannan galactosyltransferase. Galactomannan is a noncellulosic polysaccharides of plant cell wall. The chain is Probable glucomannan 4-beta-mannosyltransferase 6 from Oryza sativa subsp. japonica (Rice).